A 175-amino-acid chain; its full sequence is uncharacterized protein (175 aa).

The first 33 residues, 1–33 (MERLPYEIVSTIFRKAILHYVLIRGTTYPQSLA), serve as a signal peptide directing secretion.

This is an uncharacterized protein from Methanocaldococcus jannaschii (strain ATCC 43067 / DSM 2661 / JAL-1 / JCM 10045 / NBRC 100440) (Methanococcus jannaschii).